The primary structure comprises 371 residues: Protein lifeguard 1 (371 aa).

Residues 1-145 (MSHEKSFLVS…EGPPSYYDNQ (145 aa)) are disordered. The span at 14–49 (YPPPNPGYPGGPQPPMPPYAQPPYPGAPYPQPPFQP) shows a compositional bias: pro residues. Residues 84–98 (YPQEGYPQGPYPQGG) are compositionally biased toward low complexity. Over residues 102-114 (GPYPQSPFPPNPY) the composition is skewed to pro residues. 7 helical membrane passes run 165 to 185 (VFLVLTLQLSVTLSTVSVFTF), 197 to 217 (VWTYYVSYAVFFISLIVLSCC), 228 to 248 (LVALSVLTASLSYMVGMIASF), 253 to 273 (AVIMAVGITTAVCFTVVIFSM), 283 to 303 (MGVLLVSMVVLFIFAILCIFI), 307 to 327 (ILEIVYASLGALLFTCFLAVD), and 346 to 366 (FAALNLYTDIINIFLYILTII).

This sequence belongs to the BI1 family. LFG subfamily.

The protein resides in the membrane. Its function is as follows. Potential apoptotic regulator. This is Protein lifeguard 1 (GRINA) from Homo sapiens (Human).